Consider the following 49-residue polypeptide: Large ribosomal subunit protein bL33 (49 aa).

The protein belongs to the bacterial ribosomal protein bL33 family.

In Carboxydothermus hydrogenoformans (strain ATCC BAA-161 / DSM 6008 / Z-2901), this protein is Large ribosomal subunit protein bL33.